A 388-amino-acid polypeptide reads, in one-letter code: Aldolase vrtJ (388 aa).

K241 carries the post-translational modification N6-(pyridoxal phosphate)lysine.

Belongs to the threonine aldolase family. Requires pyridoxal 5'-phosphate as cofactor.

The protein operates within secondary metabolite biosynthesis; terpenoid biosynthesis. Its function is as follows. Aldolase; part of the gene cluster that mediates the biosynthesis of viridicatumtoxin, a tetracycline-like fungal meroterpenoid with a unique, fused spirobicyclic ring system. The first step of the pathway is the production of the malonamoyl-CoA starter unit for the polyketide synthase vrtA. The aldolase vrtJ may be involved in the synthesis of the malonamate substrate for malonamoyl-CoA synthetase vrtB. The polyketide synthase vrtA then may utilize the malonamoyl-CoA starter unit, followed by sequential condensation of eight malonyl-CoA units to form the polyketide backbone. The cyclization of the last ring could be mediated by the lactamase-like protein vrtG. The proposed post-PKS tailoring steps are a hydroxylation at C5 catalyzed the cytochrome P450 monooxygenase vrtE, a hydroxylation at C12a catalyzed by VrtH and/or VrtI, and an O-methylation by the O-methyltransferase vrtF. VrtC is then proposed to catalyze the transfer of a geranyl group synthesized by vrtD to the aromatic C ring of the tetracyclic polyketide intermediate of viridicatumtoxin to yield previridicatumtoxin. Finally, the cytochrome P450 monooxygenase vrtK catalyzes the spirocyclization of the geranyl moiety of previridicatumtoxin to afford viridicatumtoxin. In Penicillium aethiopicum, this protein is Aldolase vrtJ.